We begin with the raw amino-acid sequence, 1101 residues long: Type VI secretion system component TssM1 (1101 aa).

The chain crosses the membrane as a helical span at residues 371–391 (LTIGALSATALVVLAVTAVWI).

The protein localises to the cell inner membrane. Functionally, core component of the type VI (T6SS) secretion system that plays a role in the release of toxins targeting both eukaryotic and prokaryotic species. Plays an essential role in stabilization of assembled TssK1 structure at a fixed perimembrane site. The polypeptide is Type VI secretion system component TssM1 (Pseudomonas aeruginosa (strain ATCC 15692 / DSM 22644 / CIP 104116 / JCM 14847 / LMG 12228 / 1C / PRS 101 / PAO1)).